The following is a 92-amino-acid chain: Large ribosomal subunit protein eL43 (92 aa).

The C4-type zinc-finger motif lies at 39-60 (CDFCGKYGMKRQAVGIWCCKGC).

This sequence belongs to the eukaryotic ribosomal protein eL43 family.

In Ostreococcus tauri, this protein is Large ribosomal subunit protein eL43 (RPL37a).